We begin with the raw amino-acid sequence, 621 residues long: KIF-binding protein (621 aa).

The residue at position 178 (S178) is a Phosphoserine.

This sequence belongs to the KIF-binding protein family. As to quaternary structure, interacts with KIF1B; positively regulates KIF1B microtubule motor activity. Interacts with STMN2.

The protein resides in the cytoplasm. The protein localises to the cytoskeleton. Activator of KIF1B plus-end-directed microtubule motor activity. Required for organization of axonal microtubules, and axonal outgrowth and maintenance during peripheral and central nervous system development. The polypeptide is KIF-binding protein (KIFBP) (Bos taurus (Bovine)).